The following is a 251-amino-acid chain: Malonyl-[acyl-carrier protein] O-methyltransferase (251 aa).

The protein belongs to the methyltransferase superfamily.

It carries out the reaction malonyl-[ACP] + S-adenosyl-L-methionine = malonyl-[ACP] methyl ester + S-adenosyl-L-homocysteine. It participates in cofactor biosynthesis; biotin biosynthesis. In terms of biological role, converts the free carboxyl group of a malonyl-thioester to its methyl ester by transfer of a methyl group from S-adenosyl-L-methionine (SAM). It allows to synthesize pimeloyl-ACP via the fatty acid synthetic pathway. This is Malonyl-[acyl-carrier protein] O-methyltransferase from Pseudescherichia vulneris (Escherichia vulneris).